A 377-amino-acid chain; its full sequence is tRNA-specific 2-thiouridylase MnmA (377 aa).

ATP-binding positions include 18-25 and methionine 44; that span reads AMSGGVDS. The active-site Nucleophile is cysteine 113. Cysteine 113 and cysteine 210 are disulfide-bonded. Glycine 137 contacts ATP. Residues 159–161 form an interaction with tRNA region; the sequence is RDQ. The active-site Cysteine persulfide intermediate is cysteine 210.

The protein belongs to the MnmA/TRMU family.

The protein localises to the cytoplasm. The catalysed reaction is S-sulfanyl-L-cysteinyl-[protein] + uridine(34) in tRNA + AH2 + ATP = 2-thiouridine(34) in tRNA + L-cysteinyl-[protein] + A + AMP + diphosphate + H(+). Catalyzes the 2-thiolation of uridine at the wobble position (U34) of tRNA, leading to the formation of s(2)U34. This Rhodospirillum rubrum (strain ATCC 11170 / ATH 1.1.1 / DSM 467 / LMG 4362 / NCIMB 8255 / S1) protein is tRNA-specific 2-thiouridylase MnmA.